Here is a 333-residue protein sequence, read N- to C-terminus: Ribosomal RNA small subunit methyltransferase H (333 aa).

Residues 34 to 36, aspartate 59, phenylalanine 86, aspartate 112, and glutamine 119 each bind S-adenosyl-L-methionine; that span reads GGH.

The protein belongs to the methyltransferase superfamily. RsmH family.

Its subcellular location is the cytoplasm. The catalysed reaction is cytidine(1402) in 16S rRNA + S-adenosyl-L-methionine = N(4)-methylcytidine(1402) in 16S rRNA + S-adenosyl-L-homocysteine + H(+). Specifically methylates the N4 position of cytidine in position 1402 (C1402) of 16S rRNA. In Prosthecochloris aestuarii (strain DSM 271 / SK 413), this protein is Ribosomal RNA small subunit methyltransferase H.